The following is a 261-amino-acid chain: Glucose 1-dehydrogenase 2 (261 aa).

11 to 35 (VVTGGSKGLGRAMAVRFGQEQSKVV) is a binding site for NADP(+). Serine 145 is a substrate binding site. The active-site Proton acceptor is tyrosine 158.

It belongs to the short-chain dehydrogenases/reductases (SDR) family. Homotetramer.

It carries out the reaction D-glucose + NAD(+) = D-glucono-1,5-lactone + NADH + H(+). The catalysed reaction is D-glucose + NADP(+) = D-glucono-1,5-lactone + NADPH + H(+). This Priestia megaterium (Bacillus megaterium) protein is Glucose 1-dehydrogenase 2 (gdhII).